The chain runs to 288 residues: Bifunctional protein FolD (288 aa).

Residues 166-168 and Ile232 contribute to the NADP(+) site; that span reads GAS.

It belongs to the tetrahydrofolate dehydrogenase/cyclohydrolase family. Homodimer.

The enzyme catalyses (6R)-5,10-methylene-5,6,7,8-tetrahydrofolate + NADP(+) = (6R)-5,10-methenyltetrahydrofolate + NADPH. The catalysed reaction is (6R)-5,10-methenyltetrahydrofolate + H2O = (6R)-10-formyltetrahydrofolate + H(+). It functions in the pathway one-carbon metabolism; tetrahydrofolate interconversion. Functionally, catalyzes the oxidation of 5,10-methylenetetrahydrofolate to 5,10-methenyltetrahydrofolate and then the hydrolysis of 5,10-methenyltetrahydrofolate to 10-formyltetrahydrofolate. This Cronobacter sakazakii (strain ATCC BAA-894) (Enterobacter sakazakii) protein is Bifunctional protein FolD.